Consider the following 1405-residue polypeptide: DNA-directed RNA polymerase subunit beta' (1405 aa).

Residues Cys65, Cys67, Cys80, and Cys83 each coordinate Zn(2+). The Mg(2+) site is built by Asp468, Asp470, and Asp472. Positions 811, 885, 892, and 895 each coordinate Zn(2+).

This sequence belongs to the RNA polymerase beta' chain family. The RNAP catalytic core consists of 2 alpha, 1 beta, 1 beta' and 1 omega subunit. When a sigma factor is associated with the core the holoenzyme is formed, which can initiate transcription. Requires Mg(2+) as cofactor. It depends on Zn(2+) as a cofactor.

It carries out the reaction RNA(n) + a ribonucleoside 5'-triphosphate = RNA(n+1) + diphosphate. Functionally, DNA-dependent RNA polymerase catalyzes the transcription of DNA into RNA using the four ribonucleoside triphosphates as substrates. In Azobacteroides pseudotrichonymphae genomovar. CFP2, this protein is DNA-directed RNA polymerase subunit beta'.